Consider the following 287-residue polypeptide: Eukaryotic translation initiation factor 3 subunit F (287 aa).

Positions 12 to 142 (VRVHPVVLFQ…IKAYVCVSLG (131 aa)) constitute an MPN domain.

This sequence belongs to the eIF-3 subunit F family. Component of the eukaryotic translation initiation factor 3 (eIF-3) complex.

Its subcellular location is the cytoplasm. In terms of biological role, component of the eukaryotic translation initiation factor 3 (eIF-3) complex, which is involved in protein synthesis of a specialized repertoire of mRNAs and, together with other initiation factors, stimulates binding of mRNA and methionyl-tRNAi to the 40S ribosome. The eIF-3 complex specifically targets and initiates translation of a subset of mRNAs involved in cell proliferation. The protein is Eukaryotic translation initiation factor 3 subunit F of Anopheles gambiae (African malaria mosquito).